A 627-amino-acid chain; its full sequence is Plasmepsin IX (627 aa).

Over 1-13 (MFFINFKKIKKKQ) the chain is Cytoplasmic. A helical; Signal-anchor for type II membrane protein transmembrane segment spans residues 14–34 (FPIYLTQHRIITVFLIFIYFI). Residues 35-627 (NLKDCFHINN…SSLHNKINNL (593 aa)) are Lumenal-facing. Residues 228 to 605 (YVGYIQIGTP…NNNSSYVGIA (378 aa)) form the Peptidase A1 domain. Catalysis depends on residues Asp-246 and Asp-495.

It belongs to the peptidase A1 family. In terms of processing, autocleaved into a p55 mature form.

It localises to the membrane. Its subcellular location is the cytoplasmic vesicle. It is found in the secretory vesicle. The protein localises to the rhoptry. Inhibited by small molecule 49c. Inhibited by small molecule WM382. Functionally, during the asexual blood stage, initiates the proteolytic maturation of several rhoptry proteins and thus, is required for merozoite invasion of host erythrocytes and probably the subsequent development of the ring-stage. Cleaves rhoptry associated protein 1 RAP1 and apical sushi protein ASP during schizont maturation. Also cleaves rhoptry protein RON3. This chain is Plasmepsin IX, found in Plasmodium falciparum (isolate 3D7).